A 179-amino-acid polypeptide reads, in one-letter code: NADH-quinone oxidoreductase subunit B (179 aa).

Positions 52, 53, 117, and 147 each coordinate [4Fe-4S] cluster.

This sequence belongs to the complex I 20 kDa subunit family. NDH-1 is composed of 14 different subunits. Subunits NuoB, C, D, E, F, and G constitute the peripheral sector of the complex. It depends on [4Fe-4S] cluster as a cofactor.

The protein localises to the cell inner membrane. The enzyme catalyses a quinone + NADH + 5 H(+)(in) = a quinol + NAD(+) + 4 H(+)(out). In terms of biological role, NDH-1 shuttles electrons from NADH, via FMN and iron-sulfur (Fe-S) centers, to quinones in the respiratory chain. The immediate electron acceptor for the enzyme in this species is believed to be ubiquinone. Couples the redox reaction to proton translocation (for every two electrons transferred, four hydrogen ions are translocated across the cytoplasmic membrane), and thus conserves the redox energy in a proton gradient. This chain is NADH-quinone oxidoreductase subunit B, found in Ehrlichia chaffeensis (strain ATCC CRL-10679 / Arkansas).